The sequence spans 342 residues: D-erythrose-4-phosphate dehydrogenase (342 aa).

12 to 13 (RI) provides a ligand contact to NAD(+). Substrate contacts are provided by residues 154–156 (SCT), Arg200, 213–214 (TK), and Arg236. Cys155 functions as the Nucleophile in the catalytic mechanism. Asn318 lines the NAD(+) pocket.

The protein belongs to the glyceraldehyde-3-phosphate dehydrogenase family. Epd subfamily. In terms of assembly, homotetramer.

It is found in the cytoplasm. The catalysed reaction is D-erythrose 4-phosphate + NAD(+) + H2O = 4-phospho-D-erythronate + NADH + 2 H(+). Its pathway is cofactor biosynthesis; pyridoxine 5'-phosphate biosynthesis; pyridoxine 5'-phosphate from D-erythrose 4-phosphate: step 1/5. Functionally, catalyzes the NAD-dependent conversion of D-erythrose 4-phosphate to 4-phosphoerythronate. This chain is D-erythrose-4-phosphate dehydrogenase, found in Salmonella arizonae (strain ATCC BAA-731 / CDC346-86 / RSK2980).